The following is a 357-amino-acid chain: RNA 3'-terminal phosphate cyclase (357 aa).

Residues Q102 and 293 to 296 (HMGD) each bind ATP. H319 functions as the Tele-AMP-histidine intermediate in the catalytic mechanism.

Belongs to the RNA 3'-terminal cyclase family. Type 1 subfamily.

Its subcellular location is the cytoplasm. It carries out the reaction a 3'-end 3'-phospho-ribonucleotide-RNA + ATP = a 3'-end 2',3'-cyclophospho-ribonucleotide-RNA + AMP + diphosphate. Its function is as follows. Catalyzes the conversion of 3'-phosphate to a 2',3'-cyclic phosphodiester at the end of RNA. The mechanism of action of the enzyme occurs in 3 steps: (A) adenylation of the enzyme by ATP; (B) transfer of adenylate to an RNA-N3'P to produce RNA-N3'PP5'A; (C) and attack of the adjacent 2'-hydroxyl on the 3'-phosphorus in the diester linkage to produce the cyclic end product. The biological role of this enzyme is unknown but it is likely to function in some aspects of cellular RNA processing. This Staphylothermus marinus (strain ATCC 43588 / DSM 3639 / JCM 9404 / F1) protein is RNA 3'-terminal phosphate cyclase.